A 32-amino-acid chain; its full sequence is Natriuretic peptide Coa_NP2 (32 aa).

A disulfide bridge links Cys-8 with Cys-24.

The protein belongs to the natriuretic peptide family. Snake NP subfamily. Expressed by the venom gland.

Its subcellular location is the secreted. In terms of biological role, snake venom natriuretic peptide that exhibits hypotensive and vasorelaxant effects. Produces a dose-dependent hypotension in rats, followed by significant increases in concentrations of markers of nitric oxide (NO) formation measured in the plasma and vasorelaxation in a thoracic aortic ring bath. The peptide may exert its hypotensive action, at least in part, through stimulation of NO production. The vasorelaxant effect is endothelium-dependent and does not appear to be mediated by the natriuretic peptide receptor-A, as its action is not modified by isatin (a potent NPR1 antagonist). May act by activating the natriuretic peptide receptor-B (NPR2). The chain is Natriuretic peptide Coa_NP2 from Crotalus lutosus abyssus (Grand Canyon rattlesnake).